Here is a 333-residue protein sequence, read N- to C-terminus: L-lactate dehydrogenase A chain (333 aa).

NAD(+) contacts are provided by residues 30–58 and Arg100; that span reads GAVG…IEDK. Substrate is bound by residues Arg107, Asn139, and Arg170. NAD(+) is bound at residue Asn139. The Proton acceptor role is filled by His194. Thr249 serves as a coordination point for substrate.

Belongs to the LDH/MDH superfamily. LDH family. Homotetramer.

Its subcellular location is the cytoplasm. It catalyses the reaction (S)-lactate + NAD(+) = pyruvate + NADH + H(+). The protein operates within fermentation; pyruvate fermentation to lactate; (S)-lactate from pyruvate: step 1/1. Its function is as follows. Interconverts simultaneously and stereospecifically pyruvate and lactate with concomitant interconversion of NADH and NAD(+). The polypeptide is L-lactate dehydrogenase A chain (LDHA) (Ambystoma mexicanum (Axolotl)).